We begin with the raw amino-acid sequence, 118 residues long: Large ribosomal subunit protein bL20 (118 aa).

It belongs to the bacterial ribosomal protein bL20 family.

Its function is as follows. Binds directly to 23S ribosomal RNA and is necessary for the in vitro assembly process of the 50S ribosomal subunit. It is not involved in the protein synthesizing functions of that subunit. This chain is Large ribosomal subunit protein bL20, found in Bacillus mycoides (strain KBAB4) (Bacillus weihenstephanensis).